Reading from the N-terminus, the 168-residue chain is UPF0114 protein PC1_0431 (168 aa).

3 helical membrane-spanning segments follow: residues 15–35, 53–73, and 136–156; these read LLAP…IKFF, LVLV…LVMV, and LMWY…MGYL.

This sequence belongs to the UPF0114 family.

The protein localises to the cell membrane. This Pectobacterium carotovorum subsp. carotovorum (strain PC1) protein is UPF0114 protein PC1_0431.